Reading from the N-terminus, the 291-residue chain is 33 kDa chaperonin (291 aa).

2 cysteine pairs are disulfide-bonded: Cys-229/Cys-231 and Cys-262/Cys-265.

The protein belongs to the HSP33 family. Under oxidizing conditions two disulfide bonds are formed involving the reactive cysteines. Under reducing conditions zinc is bound to the reactive cysteines and the protein is inactive.

The protein resides in the cytoplasm. Functionally, redox regulated molecular chaperone. Protects both thermally unfolding and oxidatively damaged proteins from irreversible aggregation. Plays an important role in the bacterial defense system toward oxidative stress. This chain is 33 kDa chaperonin, found in Aliivibrio salmonicida (strain LFI1238) (Vibrio salmonicida (strain LFI1238)).